The following is a 248-amino-acid chain: Protein canopy homolog 4 (248 aa).

An N-terminal signal peptide occupies residues M1–A21. Cystine bridges form between C38–C196, C41–C184, and C94–C156. Residues T200–L248 are disordered. Residues T213–G230 are compositionally biased toward acidic residues. A compositionally biased stretch (basic and acidic residues) spans G231–L248.

This sequence belongs to the canopy family. As to quaternary structure, interacts with TLR4.

The protein resides in the secreted. Its function is as follows. Plays a role in the regulation of the cell surface expression of TLR4. This is Protein canopy homolog 4 (CNPY4) from Homo sapiens (Human).